The sequence spans 310 residues: HPr kinase/phosphorylase (310 aa).

Residues histidine 138 and lysine 159 contribute to the active site. Position 153–160 (153–160 (GKSGVGKS)) interacts with ATP. Serine 160 is a binding site for Mg(2+). Aspartate 177 (proton acceptor; for phosphorylation activity. Proton donor; for dephosphorylation activity) is an active-site residue. The segment at 201 to 210 (LEIRGLGIIN) is important for the catalytic mechanism of both phosphorylation and dephosphorylation. Residue glutamate 202 coordinates Mg(2+). Residue arginine 243 is part of the active site. The interval 264–269 (PVRPGR) is important for the catalytic mechanism of dephosphorylation.

The protein belongs to the HPrK/P family. As to quaternary structure, homohexamer. Mg(2+) is required as a cofactor.

The catalysed reaction is [HPr protein]-L-serine + ATP = [HPr protein]-O-phospho-L-serine + ADP + H(+). The enzyme catalyses [HPr protein]-O-phospho-L-serine + phosphate + H(+) = [HPr protein]-L-serine + diphosphate. Catalyzes the ATP- as well as the pyrophosphate-dependent phosphorylation of a specific serine residue in HPr, a phosphocarrier protein of the phosphoenolpyruvate-dependent sugar phosphotransferase system (PTS). HprK/P also catalyzes the pyrophosphate-producing, inorganic phosphate-dependent dephosphorylation (phosphorolysis) of seryl-phosphorylated HPr (P-Ser-HPr). The two antagonistic activities of HprK/P are regulated by several intracellular metabolites, which change their concentration in response to the absence or presence of rapidly metabolisable carbon sources (glucose, fructose, etc.) in the growth medium. Also phosphorylates/dephosphorylates the HPr-like catabolite repression protein crh on a specific serine residue. Therefore, by controlling the phosphorylation state of HPr and crh, HPrK/P is a sensor enzyme that plays a major role in the regulation of carbon metabolism and sugar transport: it mediates carbon catabolite repression (CCR), and regulates PTS-catalyzed carbohydrate uptake and inducer exclusion. This is HPr kinase/phosphorylase from Bacillus pumilus (strain SAFR-032).